The sequence spans 560 residues: Membrane-bound O-acyltransferase GUP1 (560 aa).

Residues 1–43 (MSLISILSPLITSEGLDSRIKPSPKKDASTTTKPSLWKTTEFK) are Extracellular-facing. The chain crosses the membrane as a helical span at residues 44-64 (FYYIAFLVVVPLMFYAGLQAS). At 65 to 101 (SPENPNYARYERLLSQGWLFGRKVDNSDSQYRFFRDN) the chain is on the cytoplasmic side. The chain crosses the membrane as a helical span at residues 102–122 (FALLSVLMLVHTSIKRIVLYS). The Extracellular segment spans residues 123-131 (TNITKLRFD). The helical transmembrane segment at 132 to 152 (LIFGLIFLVAAHGVNSIRILA) threads the bilayer. Over 153 to 165 (HMLILYAIAHVLK) the chain is Cytoplasmic. Residues 166–185 (NFRRIATISIWIYGISTLFI) form a helical membrane-spanning segment. The Extracellular segment spans residues 186–276 (NDNFRAYPFG…AAHPIQDYSL (91 aa)). A helical membrane pass occupies residues 277–297 (MNYIAYVTYTPLFIAGPIITF). Residues 298–322 (NDYVYQSKHTLPSINFKFIFYYAVR) lie on the Cytoplasmic side of the membrane. A helical transmembrane segment spans residues 323–343 (FVIALLSMEFILHFLHVVAIS). Residues 344–352 (KTKAWENDT) lie on the Extracellular side of the membrane. A helical membrane pass occupies residues 353-373 (PFQISMIGLFNLNIIWLKLLI). The Cytoplasmic portion of the chain corresponds to 374-432 (PWRLFRLWALLDGIDTPENMIRCVDNNYSSLAFWRAWHRSYNKWVVRYIYIPLGGSKNR). The next 2 membrane-spanning stretches (helical) occupy residues 433-453 (VLTSLAVFSFVAIWHDIELKL) and 454-474 (LLWGWLIVLFLLPEIFATQIF). The active site involves H447. The Cytoplasmic segment spans residues 475–485 (SHYTDAVWYRH). Residues 486 to 506 (VCAVGAVFNIWVMMIANLFGF) form a helical membrane-spanning segment. The Extracellular segment spans residues 507–526 (CLGSDGTKKLLSDMFCTVSG). Residues 527 to 547 (FKFVILASVSLFIAVQIMFEI) form a helical membrane-spanning segment. The Cytoplasmic portion of the chain corresponds to 548-560 (REEEKRHGIYLKC).

It belongs to the membrane-bound acyltransferase family. As to quaternary structure, interacts with mitochondrial outer membrane voltage-dependent anion channel (VDAC) POR1.

It is found in the cell membrane. It localises to the endoplasmic reticulum membrane. Its subcellular location is the mitochondrion membrane. Functionally, membrane-bound O-acyltransferase involved in the remodeling of glycosylphosphatidylinositol (GPI) anchors. Acts only on GPI-anchored proteins, but not on free GPI lipids. Acts as an acyltransferase for GPI anchors that adds C26 fatty acids to the sn2 position of lyso-PI-containing GPI anchors. PER1 first deacylates, GUP1 subsequently reacylates the anchor lipid, thus replacing a shorter fatty acid (C16:0 or C18:0) by C26:0. Also involved in lipid metabolism, having profound effects on sphingolipid-sterol-ordered domains integrity and assembly. Together with GUP2, has an influence on the chemical composition of the yeast extracellular matrix (yECM) in yeast multicellular aggregates, such as biofilms and colonies. Involved in cell integrity and apoptosis. In Saccharomyces cerevisiae (strain ATCC 204508 / S288c) (Baker's yeast), this protein is Membrane-bound O-acyltransferase GUP1 (GUP1).